The primary structure comprises 592 residues: Dictomallein-1 (592 aa).

The first 19 residues, 1 to 19 (MKILIILLVFLNLITNINC), serve as a signal peptide directing secretion. Positions 140–402 (PNIGHETNLN…QNYFKDSIIY (263 aa)) constitute a Peptidase M66 domain. Zn(2+) is bound at residue H294. E295 is a catalytic residue. Residues H298 and H304 each coordinate Zn(2+).

Belongs to the dictomallein family. Requires Zn(2+) as cofactor.

Its subcellular location is the secreted. This chain is Dictomallein-1 (dtmlA), found in Dictyostelium discoideum (Social amoeba).